Here is a 474-residue protein sequence, read N- to C-terminus: BPI fold-containing family B member 1 (474 aa).

The N-terminal stretch at 1 to 21 (MAGPWIITLLCGLLGATLVQA) is a signal peptide. Residues N153, N160, N263, and N400 are each glycosylated (N-linked (GlcNAc...) asparagine). An intrachain disulfide couples C157 to C200.

This sequence belongs to the BPI/LBP/Plunc superfamily. Plunc family. As to expression, expressed in tongue, lung, thymus, and stomach. Expressed in epithelia of palate, anterior pharynx, trachea and upper bronchi. Expressed in distal tip of papillae in the anterior third of the tongue and in serous cells of von Ebner glands in the posterior third of the tongue. Expressed in columnar epithelium of the duodenum in embryonic gut at 16.5 dpc.

Its subcellular location is the secreted. Its function is as follows. May play a role in innate immunity in mouth, nose and lungs. Binds bacterial lipopolysaccharide (LPS) and modulates the cellular responses to LPS. May be involved in formation of the left-right axis in the node of the developing embryo. In Mus musculus (Mouse), this protein is BPI fold-containing family B member 1 (Bpifb1).